The primary structure comprises 86 residues: Insulin (86 aa).

3 disulfides stabilise this stretch: C7/C72, C19/C85, and C71/C76. A propeptide spans 33 to 63 (EAEDPQVGEVELGGGPGLGGLQPLALAGPQQ) (c peptide).

It belongs to the insulin family. In terms of assembly, heterodimer of a B chain and an A chain linked by two disulfide bonds.

It is found in the secreted. Its function is as follows. Insulin decreases blood glucose concentration. It increases cell permeability to monosaccharides, amino acids and fatty acids. It accelerates glycolysis, the pentose phosphate cycle, and glycogen synthesis in liver. This is Insulin (INS) from Equus caballus (Horse).